The following is a 792-amino-acid chain: Leucine--tRNA ligase (792 aa).

The 'HIGH' region motif lies at 39–50; sequence PYPSAAGLHLGH. The 'KMSKS' region motif lies at 569-573; it reads KMSKS. Lys572 contributes to the ATP binding site.

Belongs to the class-I aminoacyl-tRNA synthetase family.

It is found in the cytoplasm. The enzyme catalyses tRNA(Leu) + L-leucine + ATP = L-leucyl-tRNA(Leu) + AMP + diphosphate. The polypeptide is Leucine--tRNA ligase (Mycoplasma genitalium (strain ATCC 33530 / DSM 19775 / NCTC 10195 / G37) (Mycoplasmoides genitalium)).